The primary structure comprises 268 residues: Orotidine 5'-phosphate decarboxylase (268 aa).

Substrate is bound by residues D37, 59-61, 91-100, Y217, and R235; these read KTH and DRKFADIGNT. K93 serves as the catalytic Proton donor.

This sequence belongs to the OMP decarboxylase family.

The catalysed reaction is orotidine 5'-phosphate + H(+) = UMP + CO2. The protein operates within pyrimidine metabolism; UMP biosynthesis via de novo pathway; UMP from orotate: step 2/2. This chain is Orotidine 5'-phosphate decarboxylase (URA4), found in Maudiozyma exigua (Yeast).